A 246-amino-acid chain; its full sequence is Proteasome subunit alpha type-6-B (246 aa).

Belongs to the peptidase T1A family. In terms of assembly, component of the 20S core complex of the 26S proteasome. The 26S proteasome is composed of a core protease (CP), known as the 20S proteasome, capped at one or both ends by the 19S regulatory particle (RP/PA700). The 20S proteasome core is composed of 28 subunits that are arranged in four stacked rings, resulting in a barrel-shaped structure. The two end rings are each formed by seven alpha subunits, and the two central rings are each formed by seven beta subunits. The catalytic chamber with the active sites is on the inside of the barrel.

The protein resides in the cytoplasm. It is found in the nucleus. In terms of biological role, the proteasome is a multicatalytic proteinase complex which is characterized by its ability to cleave peptides with Arg, Phe, Tyr, Leu, and Glu adjacent to the leaving group at neutral or slightly basic pH. The proteasome has an ATP-dependent proteolytic activity. This Arabidopsis thaliana (Mouse-ear cress) protein is Proteasome subunit alpha type-6-B (PAA2).